The following is a 638-amino-acid chain: Signal recognition particle receptor subunit alpha (638 aa).

2 disordered regions span residues 132–244 (APTT…GKKA) and 283–316 (GTGS…TKGT). Composition is skewed to basic and acidic residues over residues 137–146 (KKFEDSEKAK) and 153–165 (IETR…EKAK). Ser177 bears the Phosphoserine mark. The segment covering 204 to 239 (LSKEELIRRKREEFIQKHGRGMEKSNKSTKSDAPKE) has biased composition (basic and acidic residues). Position 284 is a phosphothreonine (Thr284). Phosphoserine is present on residues Ser296, Ser297, and Ser298. Positions 304–314 (AQNSTKPSATK) are enriched in polar residues. The interval 419–636 (YVVTFCGVNG…NAKAVVAALM (218 aa)) is NG domain. Residue 425–432 (GVNGVGKS) coordinates GTP. At Ser473 the chain carries Phosphoserine. 520-524 (DTAGR) is a binding site for GTP. Thr578 is subject to Phosphothreonine. A GTP-binding site is contributed by 588-591 (TKFD).

This sequence belongs to the GTP-binding SRP family. In terms of assembly, heterodimer with SRPRB. Interacts with the signal recognition particle (SRP) complex subunit SRP54. As to quaternary structure, (Microbial infection) May interact with Zika virus strain Mr-766 non-structural protein 4A/NS4A. May interact with Zika virus French Polynesia 10087PF/2013 non-structural protein 4A/NS4A. (Microbial infection) May interact with Dengue virus DENV2 16681 non-structural protein 4A/NS4A.

Its subcellular location is the endoplasmic reticulum membrane. In terms of biological role, component of the signal recognition particle (SRP) complex receptor (SR). Ensures, in conjunction with the SRP complex, the correct targeting of the nascent secretory proteins to the endoplasmic reticulum membrane system. Forms a guanosine 5'-triphosphate (GTP)-dependent complex with the SRP subunit SRP54. SRP receptor compaction and GTPase rearrangement drive SRP-mediated cotranslational protein translocation into the ER. The polypeptide is Signal recognition particle receptor subunit alpha (Homo sapiens (Human)).